A 268-amino-acid polypeptide reads, in one-letter code: Aliphatic sulfonates import ATP-binding protein SsuB (268 aa).

Residues 15 to 236 (LAVRNLQKTF…VRGSHRLAAL (222 aa)) form the ABC transporter domain. Residue 47–54 (GRSGCGKS) participates in ATP binding.

This sequence belongs to the ABC transporter superfamily. Aliphatic sulfonates importer (TC 3.A.1.17.2) family. As to quaternary structure, the complex is composed of two ATP-binding proteins (SsuB), two transmembrane proteins (SsuC) and a solute-binding protein (SsuA).

The protein resides in the cell inner membrane. The enzyme catalyses ATP + H2O + aliphatic sulfonate-[sulfonate-binding protein]Side 1 = ADP + phosphate + aliphatic sulfonateSide 2 + [sulfonate-binding protein]Side 1.. In terms of biological role, part of the ABC transporter complex SsuABC involved in aliphatic sulfonates import. Responsible for energy coupling to the transport system. This Pseudomonas fluorescens (strain Pf0-1) protein is Aliphatic sulfonates import ATP-binding protein SsuB.